A 490-amino-acid chain; its full sequence is Betaine aldehyde dehydrogenase (490 aa).

Residue aspartate 93 coordinates K(+). Position 150–152 (150–152 (GAW)) interacts with NAD(+). The active-site Charge relay system is the lysine 162. An NAD(+)-binding site is contributed by 176–179 (KPSE). Valine 180 contacts K(+). Residue 230 to 233 (GIAS) participates in NAD(+) binding. Leucine 246 serves as a coordination point for K(+). Catalysis depends on glutamate 252, which acts as the Proton acceptor. Glycine 254, cysteine 286, and glutamate 387 together coordinate NAD(+). The active-site Nucleophile is the cysteine 286. Cysteine sulfenic acid (-SOH) is present on cysteine 286. Positions 457 and 460 each coordinate K(+). The active-site Charge relay system is glutamate 464.

This sequence belongs to the aldehyde dehydrogenase family. Dimer of dimers. K(+) serves as cofactor.

It catalyses the reaction betaine aldehyde + NAD(+) + H2O = glycine betaine + NADH + 2 H(+). It participates in amine and polyamine biosynthesis; betaine biosynthesis via choline pathway; betaine from betaine aldehyde: step 1/1. In terms of biological role, involved in the biosynthesis of the osmoprotectant glycine betaine. Catalyzes the irreversible oxidation of betaine aldehyde to the corresponding acid. This Yersinia pseudotuberculosis serotype IB (strain PB1/+) protein is Betaine aldehyde dehydrogenase.